A 372-amino-acid polypeptide reads, in one-letter code: GDP-mannose transporter GONST3 (372 aa).

The next 10 membrane-spanning stretches (helical) occupy residues 33 to 53 (ASVY…SIIN), 60 to 80 (FPYP…GVLL), 92 to 112 (LNLL…LSLF), 125 to 145 (TFIV…TLFL), 155 to 175 (WGSL…DYQF), 177 to 197 (IAAY…FVYI), 209 to 229 (WGLV…ELLI), 251 to 271 (VVLP…FGFS), 280 to 300 (GFTV…LMVW), and 303 to 323 (HSTF…VMYQ). A disordered region spans residues 331–372 (NATQEAKPQEQDEEQEKLLEMQENKESNSVDIKETLKSEEKL). Residues 346 to 372 (EKLLEMQENKESNSVDIKETLKSEEKL) are compositionally biased toward basic and acidic residues.

Belongs to the nucleotide-sugar transporter family. GDP-Mannose:GMP antiporter (GMA) (TC 2.A.7.13) subfamily. In terms of tissue distribution, expressed in rosette leaves, stems, flowers and siliques.

Its subcellular location is the golgi apparatus membrane. Functionally, GDP-mannose transporter that may be involved in the import of GDP-mannose from the cytoplasm into the Golgi lumen. The protein is GDP-mannose transporter GONST3 of Arabidopsis thaliana (Mouse-ear cress).